The following is a 187-amino-acid chain: ATP synthase subunit delta (187 aa).

This sequence belongs to the ATPase delta chain family. In terms of assembly, F-type ATPases have 2 components, F(1) - the catalytic core - and F(0) - the membrane proton channel. F(1) has five subunits: alpha(3), beta(3), gamma(1), delta(1), epsilon(1). F(0) has three main subunits: a(1), b(2) and c(10-14). The alpha and beta chains form an alternating ring which encloses part of the gamma chain. F(1) is attached to F(0) by a central stalk formed by the gamma and epsilon chains, while a peripheral stalk is formed by the delta and b chains.

Its subcellular location is the cell membrane. Functionally, f(1)F(0) ATP synthase produces ATP from ADP in the presence of a proton or sodium gradient. F-type ATPases consist of two structural domains, F(1) containing the extramembraneous catalytic core and F(0) containing the membrane proton channel, linked together by a central stalk and a peripheral stalk. During catalysis, ATP synthesis in the catalytic domain of F(1) is coupled via a rotary mechanism of the central stalk subunits to proton translocation. Its function is as follows. This protein is part of the stalk that links CF(0) to CF(1). It either transmits conformational changes from CF(0) to CF(1) or is implicated in proton conduction. This is ATP synthase subunit delta from Mesomycoplasma hyopneumoniae (strain 232) (Mycoplasma hyopneumoniae).